A 34-amino-acid polypeptide reads, in one-letter code: Photosystem I reaction center subunit XII (34 aa).

The helical transmembrane segment at 10–32 (VFVALVVAAHAAVLALRLSISLY) threads the bilayer.

Belongs to the PsaM family.

The protein resides in the cellular thylakoid membrane. This Parasynechococcus marenigrum (strain WH8102) protein is Photosystem I reaction center subunit XII.